The primary structure comprises 250 residues: Small ribosomal subunit protein uS2 (250 aa).

A disordered region spans residues 225–250 (GAQGGRQARGEDLGAAVEAPSEDALA).

Belongs to the universal ribosomal protein uS2 family.

The polypeptide is Small ribosomal subunit protein uS2 (Rhizorhabdus wittichii (strain DSM 6014 / CCUG 31198 / JCM 15750 / NBRC 105917 / EY 4224 / RW1) (Sphingomonas wittichii)).